The chain runs to 493 residues: Ubiquitin carboxyl-terminal hydrolase 14 (493 aa).

Positions 4 to 80 (YSVTVKWGKE…MMGSADALPE (77 aa)) constitute a Ubiquitin-like domain. A Phosphothreonine modification is found at T52. Residues 105 to 482 (CGLTNLGNTC…IAYVLLYGPR (378 aa)) enclose the USP domain. C114 serves as the catalytic Nucleophile. Phosphoserine occurs at positions 143, 148, 236, 301, and 431. The active-site Proton acceptor is the H434. An N6-acetyllysine modification is found at K448.

Belongs to the peptidase C19 family. USP14/UBP6 subfamily. In terms of assembly, homodimer (Potential). Associates with the 26S proteasome. Interacts with FANCC, CXCR4 and ERN1. Interacts with TRIM14; this interaction recruits USP14 to cleave ubiquitin chains of CGAS.

It localises to the cytoplasm. Its subcellular location is the cell membrane. It catalyses the reaction Thiol-dependent hydrolysis of ester, thioester, amide, peptide and isopeptide bonds formed by the C-terminal Gly of ubiquitin (a 76-residue protein attached to proteins as an intracellular targeting signal).. Its function is as follows. Proteasome-associated deubiquitinase which releases ubiquitin from the proteasome targeted ubiquitinated proteins. Ensures the regeneration of ubiquitin at the proteasome. Is a reversibly associated subunit of the proteasome and a large fraction of proteasome-free protein exists within the cell. Required for the degradation of the chemokine receptor CXCR4 which is critical for CXCL12-induced cell chemotaxis. Also serves as a physiological inhibitor of endoplasmic reticulum-associated degradation (ERAD) under the non-stressed condition by inhibiting the degradation of unfolded endoplasmic reticulum proteins via interaction with ERN1. Indispensable for synaptic development and function at neuromuscular junctions (NMJs). Plays a role in the innate immune defense against viruses by stabilizing the viral DNA sensor CGAS and thus inhibiting its autophagic degradation. The polypeptide is Ubiquitin carboxyl-terminal hydrolase 14 (USP14) (Oryctolagus cuniculus (Rabbit)).